Reading from the N-terminus, the 64-residue chain is Alpha-conotoxin Lt14.1 (64 aa).

Positions methionine 1 to alanine 20 are cleaved as a signal peptide. The propeptide occupies glycine 21–arginine 50. 2 disulfides stabilise this stretch: cysteine 52-cysteine 60 and cysteine 56-cysteine 63. The residue at position 63 (cysteine 63) is a Cysteine amide.

It belongs to the conotoxin L superfamily. Post-translationally, may contain a 4-hydroxyproline. Expressed by the venom duct.

The protein resides in the secreted. In terms of biological role, alpha-conotoxins act on postsynaptic membranes, they bind to the nicotinic acetylcholine receptors (nAChR) and thus inhibit them. This synthetic peptide displays analgesic activity in a hot plate assay. Analgesia is also observed against second phase pain in formalin-induced inflammatory pain model, and in a rat model of mechanically-induced pain. Effects downstream of nAChR are inhibition of calcium influx, inhibition of ERK1/2 phosphorylation and inhibition of c-fos/NOS expression. Genes associated with drug dependence are not up-regulated by this toxin. Treatment with this toxin reversed morphine withdrawal symptoms in mice. The sequence is that of Alpha-conotoxin Lt14.1 from Conus litteratus (Lettered cone).